The chain runs to 414 residues: 2-epi-5-epi-valiolone synthase (414 aa).

Residues Asp-70, 101–104, 134–138, 158–159, Lys-171, Lys-180, and 198–201 contribute to the NAD(+) site; these read ESAK, GVLTD, TT, and FLAT. The active site involves Lys-171. 3 residues coordinate Zn(2+): Glu-213, His-284, and His-300.

Belongs to the sugar phosphate cyclases superfamily. EEVS family. It depends on NAD(+) as a cofactor. The cofactor is Zn(2+).

It catalyses the reaction D-sedoheptulose 7-phosphate = 2-epi-5-epi-valiolone + phosphate. Its pathway is antibiotic biosynthesis. In terms of biological role, catalyzes the cyclization of D-sedoheptulose 7-phosphate to 2-epi-5-epi-valiolone. Involved in validamycin biosynthesis. This is 2-epi-5-epi-valiolone synthase from Streptomyces hygroscopicus subsp. jinggangensis (strain 5008).